A 520-amino-acid chain; its full sequence is BTB/POZ domain-containing protein At3g50780 (520 aa).

The disordered stretch occupies residues 43 to 68 (SHNSLTKHKQSSPALQPPKPEKKPSS). The 70-residue stretch at 127-196 (AKVILVGKQG…MYCKDMKQRL (70 aa)) folds into the BTB domain.

It participates in protein modification; protein ubiquitination. In terms of biological role, may act as a substrate-specific adapter of an E3 ubiquitin-protein ligase complex (CUL3-RBX1-BTB) which mediates the ubiquitination and subsequent proteasomal degradation of target proteins. This Arabidopsis thaliana (Mouse-ear cress) protein is BTB/POZ domain-containing protein At3g50780.